The following is a 244-amino-acid chain: Small ribosomal subunit protein uS2 (244 aa).

The protein belongs to the universal ribosomal protein uS2 family.

The polypeptide is Small ribosomal subunit protein uS2 (Buchnera aphidicola subsp. Acyrthosiphon pisum (strain 5A)).